Reading from the N-terminus, the 531-residue chain is Putative F-box protein At2g02890 (531 aa).

Positions 141–188 (RHSSSLTNDLIEEILSRLHSKSVARFRCVSKQCASMFASPYFKKLFQT) constitute an F-box domain.

The sequence is that of Putative F-box protein At2g02890 from Arabidopsis thaliana (Mouse-ear cress).